The sequence spans 119 residues: Large ribosomal subunit protein uL22 (119 aa).

This sequence belongs to the universal ribosomal protein uL22 family. As to quaternary structure, part of the 50S ribosomal subunit.

In terms of biological role, this protein binds specifically to 23S rRNA; its binding is stimulated by other ribosomal proteins, e.g. L4, L17, and L20. It is important during the early stages of 50S assembly. It makes multiple contacts with different domains of the 23S rRNA in the assembled 50S subunit and ribosome. Functionally, the globular domain of the protein is located near the polypeptide exit tunnel on the outside of the subunit, while an extended beta-hairpin is found that lines the wall of the exit tunnel in the center of the 70S ribosome. The polypeptide is Large ribosomal subunit protein uL22 (Tropheryma whipplei (strain TW08/27) (Whipple's bacillus)).